The chain runs to 161 residues: MPSFDVVCEANMVEVKNAVEQANKEISTRFDFKGSDARVEHKENELTAFADDDFKLSQVKDVLINKMAKRNVDVRFLDYGKIDKISGDKVKQVISIKKGVTGDLSKKIVRIIKDSKIKVQASIQGDAVRVSGAKRDDLQSVMAMLRKDVSEAPLDFNNFRD.

This sequence belongs to the YajQ family.

Nucleotide-binding protein. This chain is Nucleotide-binding protein H16_A3060, found in Cupriavidus necator (strain ATCC 17699 / DSM 428 / KCTC 22496 / NCIMB 10442 / H16 / Stanier 337) (Ralstonia eutropha).